Reading from the N-terminus, the 278-residue chain is Protein mtd-1 (278 aa).

An N-terminal signal peptide occupies residues 1 to 17 (MRSSLLLLVFFLSIGWA). Topologically, residues 18 to 254 (RYCVHNEKSW…EMLEEIEARK (237 aa)) are extracellular. N40, N73, N163, and N190 each carry an N-linked (GlcNAc...) asparagine glycan. The chain crosses the membrane as a helical span at residues 255–271 (VPVDSSAPVNIILSIAF). Over 272–278 (SIFLIHF) the chain is Cytoplasmic.

It is found in the cell membrane. Functionally, plays a role in mechanosensory transduction (touch sensitivity). The chain is Protein mtd-1 from Caenorhabditis elegans.